The sequence spans 253 residues: Maleate isomerase (253 aa).

Residues N14, 80–82, Y137, and N167 contribute to the substrate site; that span reads CLV. The Nucleophile role is filled by C80. C80 bears the S-(2-succinyl)cysteine mark. The active-site Proton donor is the C198. A substrate-binding site is contributed by 199-200; it reads VQ.

This sequence belongs to the maleate isomerase family. In terms of assembly, homodimer.

It carries out the reaction maleate = fumarate. Its function is as follows. Catalyzes cis-trans isomerization of the C2-C3 double bond in maleate to yield fumarate. This chain is Maleate isomerase, found in Alcaligenes faecalis.